A 282-amino-acid chain; its full sequence is Aquaporin-6 (282 aa).

Residues 1 to 25 (MDAVEPGGRGWASMLACRLWKAISR) are Cytoplasmic-facing. A helical membrane pass occupies residues 26–46 (ALFAEFLATGLYVFFGVGSVM). At 47–54 (RWPTALPS) the chain is on the extracellular side. A helical membrane pass occupies residues 55 to 73 (VLQIAITFNLVTAMAVQVT). Residues 74-78 (WKASG) are Cytoplasmic-facing. The segment at residues 79–88 (AHANPAVTLA) is an intramembrane region (discontinuously helical). The short motif at 82-84 (NPA) is the NPA 1 element. At 89–99 (FLVGSHISLPR) the chain is on the cytoplasmic side. The helical transmembrane segment at 100 to 121 (AVAYVAAQLVGATVGAALLYGV) threads the bilayer. The Extracellular portion of the chain corresponds to 122 to 141 (MPGDIRETLGINVVRNSVST). The helical transmembrane segment at 142–162 (GQAVAVELLLTLQLVLCVFAS) threads the bilayer. The Cytoplasmic portion of the chain corresponds to 163 to 168 (TDSRQT). Residues 169-188 (SGSPATMIGISVALGHLIGI) form a helical membrane-spanning segment. The Extracellular segment spans residues 189–192 (HFTG). The discontinuously helical intramembrane region spans 193–205 (CSMNPARSFGPAI). The NPA 2 signature appears at 196 to 198 (NPA). The Extracellular portion of the chain corresponds to 206–213 (IIGKFTVH). Residues 214–234 (WVFWVGPLMGALLASLIYNFV) traverse the membrane as a helical segment. Over 235–282 (LFPDTKTLAQRLAILTGTVEVGTGAGAGAEPLKKESQPGSGAVEMESV) the chain is Cytoplasmic. The tract at residues 260–282 (GAGAEPLKKESQPGSGAVEMESV) is disordered.

It belongs to the MIP/aquaporin (TC 1.A.8) family. In terms of assembly, homotetramer; each monomer provides an independent solute pore.

It localises to the cytoplasmic vesicle membrane. The enzyme catalyses nitrate(in) = nitrate(out). The catalysed reaction is iodide(out) = iodide(in). It carries out the reaction bromide(in) = bromide(out). It catalyses the reaction chloride(in) = chloride(out). The enzyme catalyses Na(+)(in) = Na(+)(out). The catalysed reaction is H2O(in) = H2O(out). It carries out the reaction CO2(out) = CO2(in). It catalyses the reaction NH4(+)(in) = NH4(+)(out). Its function is as follows. Aquaporins form homotetrameric transmembrane channels, with each monomer independently mediating water transport across the plasma membrane along its osmotic gradient. Unlike classical aquaporins, AQP6 is an intracellular channel with selective anion permeability, particularly for nitrate, and exhibits very low water permeability. It may also facilitate the transport of gases, such as CO2 and NH4(+), as demonstrated in vitro. This Homo sapiens (Human) protein is Aquaporin-6.